We begin with the raw amino-acid sequence, 379 residues long: Anhydro-N-acetylmuramic acid kinase (379 aa).

9 to 16 contributes to the ATP binding site; the sequence is GTSADGVD.

This sequence belongs to the anhydro-N-acetylmuramic acid kinase family.

The catalysed reaction is 1,6-anhydro-N-acetyl-beta-muramate + ATP + H2O = N-acetyl-D-muramate 6-phosphate + ADP + H(+). It participates in amino-sugar metabolism; 1,6-anhydro-N-acetylmuramate degradation. The protein operates within cell wall biogenesis; peptidoglycan recycling. Its function is as follows. Catalyzes the specific phosphorylation of 1,6-anhydro-N-acetylmuramic acid (anhMurNAc) with the simultaneous cleavage of the 1,6-anhydro ring, generating MurNAc-6-P. Is required for the utilization of anhMurNAc either imported from the medium or derived from its own cell wall murein, and thus plays a role in cell wall recycling. The protein is Anhydro-N-acetylmuramic acid kinase of Prochlorococcus marinus (strain MIT 9211).